We begin with the raw amino-acid sequence, 307 residues long: UDP-3-O-acyl-N-acetylglucosamine deacetylase (307 aa).

Residues histidine 80, histidine 239, and aspartate 243 each contribute to the Zn(2+) site. The active-site Proton donor is the histidine 266.

Belongs to the LpxC family. The cofactor is Zn(2+).

It catalyses the reaction a UDP-3-O-[(3R)-3-hydroxyacyl]-N-acetyl-alpha-D-glucosamine + H2O = a UDP-3-O-[(3R)-3-hydroxyacyl]-alpha-D-glucosamine + acetate. Its pathway is glycolipid biosynthesis; lipid IV(A) biosynthesis; lipid IV(A) from (3R)-3-hydroxytetradecanoyl-[acyl-carrier-protein] and UDP-N-acetyl-alpha-D-glucosamine: step 2/6. Catalyzes the hydrolysis of UDP-3-O-myristoyl-N-acetylglucosamine to form UDP-3-O-myristoylglucosamine and acetate, the committed step in lipid A biosynthesis. The protein is UDP-3-O-acyl-N-acetylglucosamine deacetylase of Neisseria meningitidis serogroup C / serotype 2a (strain ATCC 700532 / DSM 15464 / FAM18).